We begin with the raw amino-acid sequence, 224 residues long: Superoxide dismutase [Mn], mitochondrial (224 aa).

The transit peptide at 1 to 20 (MLLARAFARRSLRAGLWCRQ) directs the protein to the mitochondrion. Mn(2+) is bound by residues His-46, His-94, Asp-177, and His-181.

Belongs to the iron/manganese superoxide dismutase family. Homotetramer. Requires Mn(2+) as cofactor.

Its subcellular location is the mitochondrion matrix. It catalyses the reaction 2 superoxide + 2 H(+) = H2O2 + O2. Functionally, destroys superoxide anion radicals which are normally produced within the cells and which are toxic to biological systems. The protein is Superoxide dismutase [Mn], mitochondrial of Charybdis feriata (Crucifix crab).